A 466-amino-acid polypeptide reads, in one-letter code: ATP synthase subunit beta (466 aa).

Position 156–163 (156–163) interacts with ATP; sequence GGAGVGKT.

It belongs to the ATPase alpha/beta chains family. As to quaternary structure, F-type ATPases have 2 components, CF(1) - the catalytic core - and CF(0) - the membrane proton channel. CF(1) has five subunits: alpha(3), beta(3), gamma(1), delta(1), epsilon(1). CF(0) has three main subunits: a(1), b(2) and c(9-12). The alpha and beta chains form an alternating ring which encloses part of the gamma chain. CF(1) is attached to CF(0) by a central stalk formed by the gamma and epsilon chains, while a peripheral stalk is formed by the delta and b chains.

The protein localises to the cell inner membrane. The catalysed reaction is ATP + H2O + 4 H(+)(in) = ADP + phosphate + 5 H(+)(out). Functionally, produces ATP from ADP in the presence of a proton gradient across the membrane. The catalytic sites are hosted primarily by the beta subunits. This Dechloromonas aromatica (strain RCB) protein is ATP synthase subunit beta.